Here is a 311-residue protein sequence, read N- to C-terminus: Methionyl-tRNA formyltransferase (311 aa).

110–113 lines the (6S)-5,6,7,8-tetrahydrofolate pocket; it reads SLLP.

This sequence belongs to the Fmt family.

The catalysed reaction is L-methionyl-tRNA(fMet) + (6R)-10-formyltetrahydrofolate = N-formyl-L-methionyl-tRNA(fMet) + (6S)-5,6,7,8-tetrahydrofolate + H(+). In terms of biological role, attaches a formyl group to the free amino group of methionyl-tRNA(fMet). The formyl group appears to play a dual role in the initiator identity of N-formylmethionyl-tRNA by promoting its recognition by IF2 and preventing the misappropriation of this tRNA by the elongation apparatus. In Streptococcus equi subsp. equi (strain 4047), this protein is Methionyl-tRNA formyltransferase.